A 122-amino-acid polypeptide reads, in one-letter code: Large ribosomal subunit protein uL14 (122 aa).

The protein belongs to the universal ribosomal protein uL14 family. In terms of assembly, part of the 50S ribosomal subunit. Forms a cluster with proteins L3 and L19. In the 70S ribosome, L14 and L19 interact and together make contacts with the 16S rRNA in bridges B5 and B8.

Its function is as follows. Binds to 23S rRNA. Forms part of two intersubunit bridges in the 70S ribosome. This is Large ribosomal subunit protein uL14 from Alcanivorax borkumensis (strain ATCC 700651 / DSM 11573 / NCIMB 13689 / SK2).